Here is a 302-residue protein sequence, read N- to C-terminus: Snake venom metalloprotease inhibitor 02A10 (302 aa).

The signal sequence occupies residues 1 to 23 (MSVSRLAASGLLLVSLLALALDG). A propeptide spanning residues 24–47 (KPVEKWSPWLWPPRPRPPIPPLQQ) is cleaved from the precursor. A disordered region spans residues 32–302 (WLWPPRPRPP…CPKLPPSGGH (271 aa)). Positions 33–44 (LWPPRPRPPIPP) are enriched in pro residues. Residue Gln48 is modified to Pyrrolidone carboxylic acid. Positions 51-58 (LDPPIPQQ) are excised as a propeptide. At Gln59 the chain carries Pyrrolidone carboxylic acid. The propeptide occupies 62-69 (LDPPIPQQ). Pyrrolidone carboxylic acid is present on Gln70. A propeptide spanning residues 73-80 (LDPPIPQQ) is cleaved from the precursor. Residue Gln81 is modified to Pyrrolidone carboxylic acid. Positions 84 to 91 (LNPPIPQQ) are excised as a propeptide. Position 92 is a pyrrolidone carboxylic acid (Gln92). The propeptide occupies 95–102 (LDPPIPQQ). Gln103 is subject to Pyrrolidone carboxylic acid. Residues 106 to 113 (LNPPIPQQ) constitute a propeptide that is removed on maturation. Residue Gln114 is modified to Pyrrolidone carboxylic acid. The propeptide occupies 117–124 (LNPPIPQQ). Gln125 carries the pyrrolidone carboxylic acid modification. Positions 128–135 (LNPPIPQQ) are excised as a propeptide. A Pyrrolidone carboxylic acid modification is found at Gln136. Residues 139-146 (LNPPIPQQ) constitute a propeptide that is removed on maturation. Gln147 is subject to Pyrrolidone carboxylic acid. Positions 150–157 (LDPPIPQQ) are excised as a propeptide. Gln158 is modified (pyrrolidone carboxylic acid). Residues 161–168 (LDPPIPQQ) constitute a propeptide that is removed on maturation. The residue at position 169 (Gln169) is a Pyrrolidone carboxylic acid. The propeptide occupies 172–179 (LDPPIPQQ). Gln180 carries the pyrrolidone carboxylic acid modification. Positions 183-190 (LNPPIPQQ) are excised as a propeptide. Gln191 bears the Pyrrolidone carboxylic acid mark. Residues 194-201 (LDPPIPQQ) constitute a propeptide that is removed on maturation. Gln202 carries the post-translational modification Pyrrolidone carboxylic acid. The propeptide occupies 205–212 (LDPPIPQQ). Residue Gln213 is modified to Pyrrolidone carboxylic acid. A propeptide spanning residues 216–223 (LNPPIPQQ) is cleaved from the precursor. Position 224 is a pyrrolidone carboxylic acid (Gln224). Residues 227 to 273 (QRPLQPEVPSLMELHQERQKQGRMMHHDEDPGDAAEGPRRQKKEPGK) constitute a propeptide that is removed on maturation. 2 stretches are compositionally biased toward basic and acidic residues: residues 240–255 (LHQERQKQGRMMHHDE) and 262–273 (EGPRRQKKEPGK). A disulfide bridge connects residues Cys279 and Cys293. Positions 294 to 302 (PKLPPSGGH) are excised as a propeptide.

In the C-terminal section; belongs to the natriuretic peptide family. In terms of tissue distribution, expressed by the venom gland.

Its subcellular location is the secreted. Functionally, pEKW peptides may serve as metalloproteinase inhibitors during glandular storage. Their inhibition may be instantly disengaged, by dilution or physiochemical change, when venom is injected into tissue of the victim. Exhibits hypotensive and vasodepressor activity. Acts by activating natriuretic receptors (NPR1 and/or NPR2 and/or NPR3). This is Snake venom metalloprotease inhibitor 02A10 (Svmpi-Cce12) from Cerastes cerastes (Horned desert viper).